We begin with the raw amino-acid sequence, 374 residues long: Heptahelical transmembrane protein 5 (374 aa).

The Cytoplasmic portion of the chain corresponds to 1–79 (MGDEAEIKEH…LSIFTIHNET (79 aa)). A helical transmembrane segment spans residues 80–100 (LNVWTHLIGFFLFLALTIYTA). Residues 101-191 (TKVPSVVDLH…LIFRPITRWP (91 aa)) are Extracellular-facing. A helical membrane pass occupies residues 192-212 (FYAFLGGAIFCLLASSTCHLL). Residues 213 to 228 (SCHSERVSYIMLRLDY) are Cytoplasmic-facing. Residues 229 to 249 (AGIAALIATSFYPPVYYSFMC) form a helical membrane-spanning segment. Residues 250-256 (DPFFCNL) lie on the Extracellular side of the membrane. The chain crosses the membrane as a helical span at residues 257-277 (YLGFITILGIATVLVSLLPVF). Residues 278–288 (QSLEFRVVRAS) are Cytoplasmic-facing. Residues 289–309 (LFFGMGFSGLAPILHKLIIFW) traverse the membrane as a helical segment. The Extracellular segment spans residues 310–313 (DQPE). The helical transmembrane segment at 314 to 334 (ALHMTGYEILMGLLYGLGAVV) threads the bilayer. Residues 335–347 (YATRIPERWMPGK) are Cytoplasmic-facing. Residues 348–368 (FDIAGHSHQLFHVLVVAGALT) form a helical membrane-spanning segment. Topologically, residues 369–374 (HYRAGL) are extracellular.

It belongs to the ADIPOR family. Expressed in roots, leaves, stems and flowers.

It localises to the membrane. Its function is as follows. May play a role in abiotic stress response. This is Heptahelical transmembrane protein 5 (HHP5) from Arabidopsis thaliana (Mouse-ear cress).